Consider the following 200-residue polypeptide: dTTP/UTP pyrophosphatase (200 aa).

Asp-72 (proton acceptor) is an active-site residue.

Belongs to the Maf family. YhdE subfamily. A divalent metal cation is required as a cofactor.

It is found in the cytoplasm. The enzyme catalyses dTTP + H2O = dTMP + diphosphate + H(+). The catalysed reaction is UTP + H2O = UMP + diphosphate + H(+). Its function is as follows. Nucleoside triphosphate pyrophosphatase that hydrolyzes dTTP and UTP. May have a dual role in cell division arrest and in preventing the incorporation of modified nucleotides into cellular nucleic acids. The sequence is that of dTTP/UTP pyrophosphatase from Pseudomonas syringae pv. syringae (strain B728a).